The following is a 212-amino-acid chain: Adapter protein MecA 2 (212 aa).

This sequence belongs to the MecA family. In terms of assembly, homodimer.

Its function is as follows. Enables the recognition and targeting of unfolded and aggregated proteins to the ClpC protease or to other proteins involved in proteolysis. Acts negatively in the development of competence by binding ComK and recruiting it to the ClpCP protease. When overexpressed, inhibits sporulation. Also involved in Spx degradation by ClpC. In Halalkalibacterium halodurans (strain ATCC BAA-125 / DSM 18197 / FERM 7344 / JCM 9153 / C-125) (Bacillus halodurans), this protein is Adapter protein MecA 2 (mecA2).